Consider the following 1208-residue polypeptide: Spindle pole body protein pcp1 (1208 aa).

Residues 1-17 show a composition bias toward basic and acidic residues; the sequence is MSERDFNTQSPKFKDEN. A disordered region spans residues 1 to 91; that stretch reads MSERDFNTQS…DKYNGSLGDK (91 aa). Positions 48–64 are enriched in polar residues; it reads NDKSSFQTPLRNGSYQP. Coiled coils occupy residues 151 to 375, 387 to 803, 874 to 1091, and 1177 to 1204; these read LREQ…KENQ, TDSM…ANIE, GTET…QSTQ, and ERMK…AKAK. The residue at position 906 (serine 906) is a Phosphoserine.

Interacts with ccq1.

It is found in the nucleus. The protein localises to the cytoplasm. It localises to the cytoskeleton. The protein resides in the microtubule organizing center. Its subcellular location is the spindle pole body. Functionally, spindle pole body component that binds calmodulin. Overexpression of pcp1 causes the formation of supernumerary SPB-like structures and disrupts both mitotic spindle assembly and chromosome segregation. In Schizosaccharomyces pombe (strain 972 / ATCC 24843) (Fission yeast), this protein is Spindle pole body protein pcp1 (pcp1).